A 356-amino-acid chain; its full sequence is Pyruvate dehydrogenase E1 component subunit beta, mitochondrial (356 aa).

The N-terminal 25 residues, 1-25 (MLSSILKKIQPSLLVNFRIITRTYA), are a transit peptide targeting the mitochondrion. Glu-85 contributes to the thiamine diphosphate binding site. Residues Ile-138, Ala-186, Ile-187, Asp-189, and Asn-191 each coordinate K(+).

Tetramer of 2 alpha and 2 beta subunits. It depends on thiamine diphosphate as a cofactor.

It localises to the mitochondrion matrix. The catalysed reaction is N(6)-[(R)-lipoyl]-L-lysyl-[protein] + pyruvate + H(+) = N(6)-[(R)-S(8)-acetyldihydrolipoyl]-L-lysyl-[protein] + CO2. Functionally, the pyruvate dehydrogenase complex catalyzes the overall conversion of pyruvate to acetyl-CoA and CO(2). It contains multiple copies of three enzymatic components: pyruvate dehydrogenase (E1), dihydrolipoamide acetyltransferase (E2) and lipoamide dehydrogenase (E3). This Dictyostelium discoideum (Social amoeba) protein is Pyruvate dehydrogenase E1 component subunit beta, mitochondrial (pdhB).